Here is a 234-residue protein sequence, read N- to C-terminus: Bromodomain-containing protein DDB_G0271118 (234 aa).

The 60-residue stretch at 1 to 60 (MDLGTIKGELDNNGYSTIKDFTADVRLMFENALTYNADSSPIWKHAKTLLYFHRKHDEHV) folds into the Bromo domain. Residues 134 to 194 (NNNSNNNNNN…SSSSSSSSSS (61 aa)) are compositionally biased toward low complexity. A disordered region spans residues 134–209 (NNNSNNNNNN…KKYSDEERRN (76 aa)).

This Dictyostelium discoideum (Social amoeba) protein is Bromodomain-containing protein DDB_G0271118.